Here is a 626-residue protein sequence, read N- to C-terminus: Janus kinase and microtubule-interacting protein 1 (626 aa).

Positions 1–365 are mediates association with microtubules; it reads MSKKGRSKGE…KIKNLTRENV (365 aa). Coiled coils occupy residues 19-254 and 284-413; these read VQMA…REAE and ERDV…DDLS. Residues 365 to 626 are mediates interaction with TYK2 and GABBR1; that stretch reads VEMKEKLSAQ…ILFEPKLKFM (262 aa). A Phosphoserine modification is found at S382. Residues 452–461 show a composition bias toward polar residues; that stretch reads ETLSETSCNT. Residues 452–480 form a disordered region; sequence ETLSETSCNTDRTDRAPATPEEDLDDTTT. T470 carries the phosphothreonine modification. Positions 490 to 604 form a coiled coil; that stretch reads QLTREYQALQ…EFRVLELEVR (115 aa).

It belongs to the JAKMIP family. As to quaternary structure, homodimer. Forms a complex with GABBR1 and KIF5B/kinesin-1. Interacts with JAK1 and TYK2. Phosphorylated.

The protein resides in the cytoplasm. It is found in the cytoskeleton. The protein localises to the membrane. Associates with microtubules and may play a role in the microtubule-dependent transport of the GABA-B receptor. May play a role in JAK1 signaling and regulate microtubule cytoskeleton rearrangements. This chain is Janus kinase and microtubule-interacting protein 1 (JAKMIP1), found in Bos taurus (Bovine).